The sequence spans 324 residues: FCS-Like Zinc finger 11 (324 aa).

The segment at 266–309 (NFLGICNFCNKKLGGGDDIYMYREKSFCSEECRSEEMMIDEEDL) adopts an FLZ-type zinc-finger fold.

Belongs to the FLZ family. In terms of assembly, interacts with KIN10 and KIN11 via its FLZ-type zinc finger domain. Forms heterodimer with FLZ2 in vitro.

It is found in the cytoplasm. The protein resides in the nucleus. May act as an adapter to facilitate the interaction of SnRK1 complex with effector proteins, conferring tissue- and stimulus-type specific differences in the SnRK1 regulation pathway. This Arabidopsis thaliana (Mouse-ear cress) protein is FCS-Like Zinc finger 11.